The sequence spans 285 residues: 2,3,4,5-tetrahydropyridine-2,6-dicarboxylate N-succinyltransferase (285 aa).

The substrate site is built by arginine 111 and aspartate 148.

This sequence belongs to the transferase hexapeptide repeat family. Homotrimer.

Its subcellular location is the cytoplasm. It carries out the reaction (S)-2,3,4,5-tetrahydrodipicolinate + succinyl-CoA + H2O = (S)-2-succinylamino-6-oxoheptanedioate + CoA. Its pathway is amino-acid biosynthesis; L-lysine biosynthesis via DAP pathway; LL-2,6-diaminopimelate from (S)-tetrahydrodipicolinate (succinylase route): step 1/3. The chain is 2,3,4,5-tetrahydropyridine-2,6-dicarboxylate N-succinyltransferase from Sinorhizobium medicae (strain WSM419) (Ensifer medicae).